A 101-amino-acid polypeptide reads, in one-letter code: STAS-domain containing protein PA14_20770 (101 aa).

In terms of domain architecture, STAS spans 14–101 (LTIQIQGRFD…SNFEQLFKIS (88 aa)).

In terms of processing, phosphorylated on a serine residue, possibly on Ser-56.

It localises to the secreted. The chain is STAS-domain containing protein PA14_20770 from Pseudomonas aeruginosa (strain UCBPP-PA14).